Here is a 123-residue protein sequence, read N- to C-terminus: Large ribosomal subunit protein uL14 (123 aa).

The protein belongs to the universal ribosomal protein uL14 family. As to quaternary structure, part of the 50S ribosomal subunit. Forms a cluster with proteins L3 and L19. In the 70S ribosome, L14 and L19 interact and together make contacts with the 16S rRNA in bridges B5 and B8.

Functionally, binds to 23S rRNA. Forms part of two intersubunit bridges in the 70S ribosome. This chain is Large ribosomal subunit protein uL14, found in Koribacter versatilis (strain Ellin345).